Consider the following 116-residue polypeptide: Aspartate 1-decarboxylase (116 aa).

The active-site Schiff-base intermediate with substrate; via pyruvic acid is the Ser-25. Residue Ser-25 is modified to Pyruvic acid (Ser). Thr-57 provides a ligand contact to substrate. Tyr-58 acts as the Proton donor in catalysis. Position 73–75 (Gly-73–Ala-75) interacts with substrate.

This sequence belongs to the PanD family. As to quaternary structure, heterooctamer of four alpha and four beta subunits. It depends on pyruvate as a cofactor. Post-translationally, is synthesized initially as an inactive proenzyme, which is activated by self-cleavage at a specific serine bond to produce a beta-subunit with a hydroxyl group at its C-terminus and an alpha-subunit with a pyruvoyl group at its N-terminus.

It is found in the cytoplasm. It carries out the reaction L-aspartate + H(+) = beta-alanine + CO2. It functions in the pathway cofactor biosynthesis; (R)-pantothenate biosynthesis; beta-alanine from L-aspartate: step 1/1. Catalyzes the pyruvoyl-dependent decarboxylation of aspartate to produce beta-alanine. This is Aspartate 1-decarboxylase from Leptospira interrogans serogroup Icterohaemorrhagiae serovar copenhageni (strain Fiocruz L1-130).